An 85-amino-acid chain; its full sequence is Dual endothelin-1/VEGF signal peptide receptor (85 aa).

At 1 to 18 (MTMFKGSNEMKSRWNWGS) the chain is on the extracellular side. Residues 19-37 (ITCIICFTCVGSQLSMSSS) traverse the membrane as a helical segment. Residues 38-85 (KASNFSGPLQLYQRELEIFIVLTDVPNYRLIKENSHLHTTIVDQGRTV) are Cytoplasmic-facing.

Post-translationally, N-glycosylated. In terms of tissue distribution, expressed in kidney. Expressed in endothelial cells.

It is found in the cell membrane. Dual receptor for both endothelin-1 and the signal sequence of vascular endothelial growth factor A. Does not act as a receptor for angiotensin-2. Does not bind the VEGFA mature protein. May play a role in angiogenesis with a significant role in cardiovascular and neural development. The polypeptide is Dual endothelin-1/VEGF signal peptide receptor (Homo sapiens (Human)).